A 510-amino-acid chain; its full sequence is F-box only protein 15 (510 aa).

Residues 77 to 117 (MPSEILLKIFSYLDAVSLLCTGCVSRRFYHLANDNFIWIGI) enclose the F-box domain.

In terms of assembly, directly interacts with SKP1 and CUL1.

Functionally, substrate-recognition component of the SCF (SKP1-CUL1-F-box protein)-type E3 ubiquitin ligase complex. The sequence is that of F-box only protein 15 (FBXO15) from Homo sapiens (Human).